The following is a 525-amino-acid chain: GMP synthase [glutamine-hydrolyzing] (525 aa).

The region spanning 8–207 (KILILDFGSQ…ALDICGCAAN (200 aa)) is the Glutamine amidotransferase type-1 domain. Catalysis depends on cysteine 85, which acts as the Nucleophile. Residues histidine 181 and glutamate 183 contribute to the active site. Positions 208-400 (WKPSSIIEDA…LGLPYNMLYR (193 aa)) constitute a GMPS ATP-PPase domain. 235–241 (SGGVDSS) is an ATP binding site.

In terms of assembly, homodimer.

It carries out the reaction XMP + L-glutamine + ATP + H2O = GMP + L-glutamate + AMP + diphosphate + 2 H(+). The protein operates within purine metabolism; GMP biosynthesis; GMP from XMP (L-Gln route): step 1/1. Functionally, catalyzes the synthesis of GMP from XMP. This is GMP synthase [glutamine-hydrolyzing] from Shewanella putrefaciens (strain CN-32 / ATCC BAA-453).